The sequence spans 252 residues: Trans-aconitate 2-methyltransferase (252 aa).

The protein belongs to the methyltransferase superfamily. Tam family.

It is found in the cytoplasm. It carries out the reaction trans-aconitate + S-adenosyl-L-methionine = (E)-3-(methoxycarbonyl)pent-2-enedioate + S-adenosyl-L-homocysteine. Catalyzes the S-adenosylmethionine monomethyl esterification of trans-aconitate. The protein is Trans-aconitate 2-methyltransferase of Enterobacter sp. (strain 638).